We begin with the raw amino-acid sequence, 500 residues long: Bifunctional protein GlmU (500 aa).

The interval 1-242 (MPVQTAVVVL…SAKVAGANDR (242 aa)) is pyrophosphorylase. UDP-N-acetyl-alpha-D-glucosamine is bound by residues 10–13 (LAAG), lysine 24, glutamine 81, and 86–87 (GT). Aspartate 112 contacts Mg(2+). UDP-N-acetyl-alpha-D-glucosamine-binding residues include glycine 151, glutamate 167, asparagine 182, and asparagine 240. Asparagine 240 is a binding site for Mg(2+). A linker region spans residues 243-263 (VQLSRLAAELNRRTVENWMRA). The segment at 264–500 (GVTVVDPSTT…KQDLKDGIEQ (237 aa)) is N-acetyltransferase. The UDP-N-acetyl-alpha-D-glucosamine site is built by arginine 345 and lysine 363. Histidine 375 functions as the Proton acceptor in the catalytic mechanism. UDP-N-acetyl-alpha-D-glucosamine is bound by residues tyrosine 378 and asparagine 389. Acetyl-CoA-binding positions include alanine 392, 398-399 (NY), serine 417, and alanine 435. The segment at 459–500 (DGWVQRNRPGTPAAEAASAAGPHHSSDLHETEKQDLKDGIEQ) is disordered. A compositionally biased stretch (basic and acidic residues) spans 482-500 (HSSDLHETEKQDLKDGIEQ).

In the N-terminal section; belongs to the N-acetylglucosamine-1-phosphate uridyltransferase family. This sequence in the C-terminal section; belongs to the transferase hexapeptide repeat family. As to quaternary structure, homotrimer. Requires Mg(2+) as cofactor.

It localises to the cytoplasm. It carries out the reaction alpha-D-glucosamine 1-phosphate + acetyl-CoA = N-acetyl-alpha-D-glucosamine 1-phosphate + CoA + H(+). The catalysed reaction is N-acetyl-alpha-D-glucosamine 1-phosphate + UTP + H(+) = UDP-N-acetyl-alpha-D-glucosamine + diphosphate. It functions in the pathway nucleotide-sugar biosynthesis; UDP-N-acetyl-alpha-D-glucosamine biosynthesis; N-acetyl-alpha-D-glucosamine 1-phosphate from alpha-D-glucosamine 6-phosphate (route II): step 2/2. The protein operates within nucleotide-sugar biosynthesis; UDP-N-acetyl-alpha-D-glucosamine biosynthesis; UDP-N-acetyl-alpha-D-glucosamine from N-acetyl-alpha-D-glucosamine 1-phosphate: step 1/1. Its pathway is bacterial outer membrane biogenesis; LPS lipid A biosynthesis. In terms of biological role, catalyzes the last two sequential reactions in the de novo biosynthetic pathway for UDP-N-acetylglucosamine (UDP-GlcNAc). The C-terminal domain catalyzes the transfer of acetyl group from acetyl coenzyme A to glucosamine-1-phosphate (GlcN-1-P) to produce N-acetylglucosamine-1-phosphate (GlcNAc-1-P), which is converted into UDP-GlcNAc by the transfer of uridine 5-monophosphate (from uridine 5-triphosphate), a reaction catalyzed by the N-terminal domain. The chain is Bifunctional protein GlmU from Rhodococcus opacus (strain B4).